Reading from the N-terminus, the 410-residue chain is Serine hydroxymethyltransferase (410 aa).

Residues Leu-119 and 123–125 each bind (6S)-5,6,7,8-tetrahydrofolate; that span reads GHL. Residue Lys-228 is modified to N6-(pyridoxal phosphate)lysine. 351–353 contributes to the (6S)-5,6,7,8-tetrahydrofolate binding site; that stretch reads SPF.

It belongs to the SHMT family. In terms of assembly, homodimer. The cofactor is pyridoxal 5'-phosphate.

It localises to the cytoplasm. It catalyses the reaction (6R)-5,10-methylene-5,6,7,8-tetrahydrofolate + glycine + H2O = (6S)-5,6,7,8-tetrahydrofolate + L-serine. The protein operates within one-carbon metabolism; tetrahydrofolate interconversion. It participates in amino-acid biosynthesis; glycine biosynthesis; glycine from L-serine: step 1/1. Catalyzes the reversible interconversion of serine and glycine with tetrahydrofolate (THF) serving as the one-carbon carrier. This reaction serves as the major source of one-carbon groups required for the biosynthesis of purines, thymidylate, methionine, and other important biomolecules. Also exhibits THF-independent aldolase activity toward beta-hydroxyamino acids, producing glycine and aldehydes, via a retro-aldol mechanism. The protein is Serine hydroxymethyltransferase of Alkaliphilus metalliredigens (strain QYMF).